Reading from the N-terminus, the 335-residue chain is ATP-dependent 6-phosphofructokinase (335 aa).

An ATP-binding site is contributed by glycine 11. 21–25 provides a ligand contact to ADP; sequence RAVVR. Residues 72–73 and 102–105 each bind ATP; these read RY and GDGS. Mg(2+) is bound at residue aspartate 103. Substrate is bound at residue 125–127; that stretch reads TID. Aspartate 127 acts as the Proton acceptor in catalysis. Arginine 154 contacts ADP. Residues arginine 162 and 169–171 contribute to the substrate site; that span reads MGR. Residues 185 to 187 and 213 to 215 each bind ADP; these read GAD and KKH. Residues glutamate 222, arginine 244, and 250-253 contribute to the substrate site; that span reads HIQR.

The protein belongs to the phosphofructokinase type A (PFKA) family. ATP-dependent PFK group I subfamily. Prokaryotic clade 'B1' sub-subfamily. Homotetramer. The cofactor is Mg(2+).

It is found in the cytoplasm. The catalysed reaction is beta-D-fructose 6-phosphate + ATP = beta-D-fructose 1,6-bisphosphate + ADP + H(+). The protein operates within carbohydrate degradation; glycolysis; D-glyceraldehyde 3-phosphate and glycerone phosphate from D-glucose: step 3/4. Its activity is regulated as follows. Allosterically activated by ADP and other diphosphonucleosides, and allosterically inhibited by phosphoenolpyruvate. Catalyzes the phosphorylation of D-fructose 6-phosphate to fructose 1,6-bisphosphate by ATP, the first committing step of glycolysis. In Streptococcus pneumoniae (strain ATCC BAA-255 / R6), this protein is ATP-dependent 6-phosphofructokinase.